Reading from the N-terminus, the 525-residue chain is GMP synthase [glutamine-hydrolyzing] (525 aa).

The Glutamine amidotransferase type-1 domain occupies Arg-9–Leu-207. Catalysis depends on Cys-86, which acts as the Nucleophile. Catalysis depends on residues His-181 and Glu-183. Positions Trp-208–Arg-400 constitute a GMPS ATP-PPase domain. Residue Ser-235–Ser-241 coordinates ATP.

Homodimer.

The catalysed reaction is XMP + L-glutamine + ATP + H2O = GMP + L-glutamate + AMP + diphosphate + 2 H(+). It participates in purine metabolism; GMP biosynthesis; GMP from XMP (L-Gln route): step 1/1. Its function is as follows. Catalyzes the synthesis of GMP from XMP. The sequence is that of GMP synthase [glutamine-hydrolyzing] from Shigella flexneri.